Reading from the N-terminus, the 282-residue chain is DegV domain-containing protein spr1415 (282 aa).

Residues 3 to 280 form the DegV domain; the sequence is LAVFTDSSAY…AGSIALGYIP (278 aa). Residues Thr-61 and Ser-94 each contribute to the hexadecanoate site.

Functionally, may bind long-chain fatty acids, such as palmitate, and may play a role in lipid transport or fatty acid metabolism. The protein is DegV domain-containing protein spr1415 of Streptococcus pneumoniae (strain ATCC BAA-255 / R6).